The sequence spans 948 residues: Zinc finger CCCH domain-containing protein 18 (948 aa).

Met-1 is subject to N-acetylmethionine. The segment at 1–219 is disordered; it reads MDVAESPELD…SDRKVRPRPT (219 aa). A Phosphoserine modification is found at Ser-6. The segment covering 15 to 25 has biased composition (acidic residues); that stretch reads EDEEQPALSDD. 8 positions are modified to phosphoserine: Ser-33, Ser-45, Ser-58, Ser-64, Ser-71, Ser-75, Ser-80, and Ser-92. The segment covering 70–86 has biased composition (basic and acidic residues); the sequence is ASEPKSQDQDSEAHELS. Positions 95-105 are enriched in acidic residues; that stretch reads EEGDDVEEDGT. At Thr-105 the chain carries Phosphothreonine. Phosphoserine occurs at positions 106 and 114. Residues 106–120 are compositionally biased toward basic and acidic residues; the sequence is SDLRDEASSVTRELD. 2 stretches are compositionally biased toward acidic residues: residues 121-132 and 139-154; these read EHELDYDEEVPE and QEEEAEKAGAEEEEEK. Ser-169 is subject to Phosphoserine. Residues 177 to 186 are compositionally biased toward basic and acidic residues; it reads EAAKEKKKED. A compositionally biased stretch (acidic residues) spans 187–203; sequence DDGEIDDGEIDDDDLEE. The segment covering 204–213 has biased composition (basic and acidic residues); sequence GEVKDPSDRK. The C3H1-type zinc finger occupies 215-241; the sequence is RPRPTCRFFMKGNCTWGMSCRFIHPGV. Residue Gly-245 is modified to Omega-N-methylarginine. 2 disordered regions span residues 272-296 and 388-922; these read ANPWGGPVVDEILPPPPPEPPTESA and YTEA…TLSR. Residues 392–480 show a composition bias toward basic and acidic residues; that stretch reads EPYHNYRERE…DREKDKEKPK (89 aa). A coiled-coil region spans residues 395 to 460; the sequence is HNYRERERER…RERAKRDEKD (66 aa). At Ser-483 the chain carries Phosphoserine. Lys-506 participates in a covalent cross-link: Glycyl lysine isopeptide (Lys-Gly) (interchain with G-Cter in SUMO2). A compositionally biased stretch (basic and acidic residues) spans 506 to 516; it reads KRADEWKDPWR. Phosphoserine is present on residues Ser-528, Ser-530, and Ser-532. Positions 541–602 are enriched in low complexity; sequence SASSASASNS…SRSRSFSSSP (62 aa). A compositionally biased stretch (pro residues) spans 603-612; the sequence is SPSPTPSPHR. Residues Lys-618 and Lys-657 each participate in a glycyl lysine isopeptide (Lys-Gly) (interchain with G-Cter in SUMO2) cross-link. The segment covering 657-666 has biased composition (basic and acidic residues); the sequence is KPGDLREARR. Low complexity-rich tracts occupy residues 688 to 721 and 732 to 746; these read GSSYSGSSSRSRSLSVSSVSSVSSATSSSSSVHS and ASPVSSASSRSPTPA. Basic and acidic residues predominate over residues 756–770; that stretch reads KKEDGVREEKRRRDP. Over residues 774-804 the composition is skewed to low complexity; it reads PPKSSKAPAGGKASQQAAAPQPAVPGQPQQG. Lys-810 is modified (N6-acetyllysine). A Glycyl lysine isopeptide (Lys-Gly) (interchain with G-Cter in SUMO2) cross-link involves residue Lys-813. Basic and acidic residues predominate over residues 820–837; the sequence is AADKGSRKRYEPSDKDRQ. A phosphoserine mark is found at Ser-838, Ser-847, Ser-863, Ser-888, and Ser-891. Polar residues predominate over residues 888–898; sequence SPQSKGSSKVT. Positions 902–919 are enriched in low complexity; that stretch reads GKATDTATAGTKSGKAST. Residue Lys-903 forms a Glycyl lysine isopeptide (Lys-Gly) (interchain with G-Cter in SUMO2) linkage. Positions 916 to 945 form a coiled coil; the sequence is KASTLSRREELLKQLKAVEDAIARKRAKIP.

Interacts with ZFC3H1 in a RNase-insensitive manner.

The protein resides in the nucleus. The chain is Zinc finger CCCH domain-containing protein 18 (Zc3h18) from Mus musculus (Mouse).